The chain runs to 146 residues: MEINREDFEESIVNIGRVTKVVKGGRRFRFTALVVVGNKKGTIGFGAGKAKEVPDAIKKAVDNAFKNLSKVSIKGTTIAHDIEHKYNASRILLKPASEGTGVIAGGAVRPVLELAGIKDVLTKSIGSNNPGTLVRATVEALGRLKG.

The region spanning 8-71 is the S5 DRBM domain; sequence FEESIVNIGR…DNAFKNLSKV (64 aa).

This sequence belongs to the universal ribosomal protein uS5 family. Part of the 30S ribosomal subunit. Contacts proteins S4 and S8.

Functionally, with S4 and S12 plays an important role in translational accuracy. Its function is as follows. Located at the back of the 30S subunit body where it stabilizes the conformation of the head with respect to the body. This Sulfurimonas denitrificans (strain ATCC 33889 / DSM 1251) (Thiomicrospira denitrificans (strain ATCC 33889 / DSM 1251)) protein is Small ribosomal subunit protein uS5.